The following is a 713-amino-acid chain: uncharacterized protein (713 aa).

The chain crosses the membrane as a helical span at residues 686 to 706 (VWKFNPALYSTITNIFLLIIF).

It belongs to the plectrovirus ORF1 family.

Its subcellular location is the host membrane. This is an uncharacterized protein from Spiroplasma melliferum (SpV1).